Consider the following 613-residue polypeptide: Ribosome-associated molecular chaperone SSB1 (613 aa).

Alanine 2 carries the post-translational modification N-acetylalanine. The tract at residues 2–391 (AEGVFQGAIG…ILTGQSTSDE (390 aa)) is nucleotide binding domain (NBD). ATP is bound at residue 16–18 (TTY). Position 47 is a phosphothreonine (threonine 47). ATP-binding positions include lysine 73, 205–207 (GGT), 271–278 (ERAKRTLS), and glycine 342. The inter-domain linker stretch occupies residues 392-402 (TKDLLLLDVAP). The interval 403 to 613 (LSLGVGMQGD…RVVTKAMSSR (211 aa)) is substrate binding domain (SBD). A Contributes to ribosome binding motif is present at residues 428–430 (KRR). Threonine 431 bears the Phosphothreonine mark. A lid domain (SBDalpha) region spans residues 516-612 (SEEIEKMVNQ…KRVVTKAMSS (97 aa)). The short motif at 574 to 582 (IEAALSDAL) is the Nuclear export signal element. The required for interaction with ribosomes stretch occupies residues 601–613 (GLKRVVTKAMSSR).

Belongs to the heat shock protein 70 family. Ssb-type Hsp70 subfamily. Binds to ribosomes. Binds close to the ribosomal tunnel exit via contacts with both ribosomal proteins RPL35, RPL39 and RPL19, and rRNA. Directly interacts with nascent polypeptides. This interaction is dependent on the ribosome-associated complex (RAC). Interacts with SSE1. Interacts with FES1. Interacts with NAP1.

Its subcellular location is the cytoplasm. It catalyses the reaction ATP + H2O = ADP + phosphate + H(+). Ribosome-bound, Hsp70-type chaperone that assists in the cotranslational folding of newly synthesized proteins in the cytosol. Stimulates folding by interacting with nascent chains, binding to short, largely hydrophobic sequences exposed by unfolded proteins, thereby stabilizing longer, more slowly translated, and aggregation-prone nascent polypeptides and domains that cannot fold stably until fully synthesized. The Hsp70-protein substrate interaction depends on ATP-binding and on allosteric regulation between the NBD and the SBD. The ATP-bound state is characterized by a fast exchange rate of substrate (low affinity state), while in the ADP-bound state exchange is much slower (high affinity state). During the Hsp70 cycle, the chaperone switches between the ATP-bound state (open conformation) and the ADP-bound state (closed conformation) by major conformational rearrangements involving mainly the lid domain. Ssb cooperates with a specific Hsp40/Hsp70 co-chaperone termed the ribosome-associated complex (RAC), which stimulates the ATPase activity of the ribosome-associated pool of Ssbs and switches it to the high affinity substrate binding state. Hsp110 chaperone SSE1 and FES1 act as nucleotide exchange factors that cause substrate release. The sequence is that of Ribosome-associated molecular chaperone SSB1 from Saccharomyces cerevisiae (strain ATCC 204508 / S288c) (Baker's yeast).